A 285-amino-acid polypeptide reads, in one-letter code: Bifunctional protein FolD (285 aa).

NADP(+)-binding positions include 165 to 167 (GRG), threonine 192, and valine 233.

It belongs to the tetrahydrofolate dehydrogenase/cyclohydrolase family. Homodimer.

The catalysed reaction is (6R)-5,10-methylene-5,6,7,8-tetrahydrofolate + NADP(+) = (6R)-5,10-methenyltetrahydrofolate + NADPH. The enzyme catalyses (6R)-5,10-methenyltetrahydrofolate + H2O = (6R)-10-formyltetrahydrofolate + H(+). It functions in the pathway one-carbon metabolism; tetrahydrofolate interconversion. In terms of biological role, catalyzes the oxidation of 5,10-methylenetetrahydrofolate to 5,10-methenyltetrahydrofolate and then the hydrolysis of 5,10-methenyltetrahydrofolate to 10-formyltetrahydrofolate. This is Bifunctional protein FolD from Mycobacterium sp. (strain MCS).